The following is a 632-amino-acid chain: Biosynthetic arginine decarboxylase (632 aa).

An N6-(pyridoxal phosphate)lysine modification is found at K101. F281–Y291 lines the substrate pocket.

The protein belongs to the Orn/Lys/Arg decarboxylase class-II family. SpeA subfamily. Requires Mg(2+) as cofactor. The cofactor is pyridoxal 5'-phosphate.

The enzyme catalyses L-arginine + H(+) = agmatine + CO2. It participates in amine and polyamine biosynthesis; agmatine biosynthesis; agmatine from L-arginine: step 1/1. Its function is as follows. Catalyzes the biosynthesis of agmatine from arginine. The protein is Biosynthetic arginine decarboxylase of Escherichia coli O157:H7 (strain EC4115 / EHEC).